A 545-amino-acid polypeptide reads, in one-letter code: Glucose-6-phosphate isomerase (545 aa).

Residue E351 is the Proton donor of the active site. Active-site residues include H382 and K510.

Belongs to the GPI family.

The protein resides in the cytoplasm. It catalyses the reaction alpha-D-glucose 6-phosphate = beta-D-fructose 6-phosphate. It functions in the pathway carbohydrate biosynthesis; gluconeogenesis. It participates in carbohydrate degradation; glycolysis; D-glyceraldehyde 3-phosphate and glycerone phosphate from D-glucose: step 2/4. Functionally, catalyzes the reversible isomerization of glucose-6-phosphate to fructose-6-phosphate. The polypeptide is Glucose-6-phosphate isomerase (Helicobacter pylori (strain P12)).